Reading from the N-terminus, the 957-residue chain is Collagen alpha-1(XXI) chain (957 aa).

Residues 1-16 (MPGIIYILCSILLIES) form the signal peptide. Positions 37-211 (DLVFILDGSW…RIREIMKQKL (175 aa)) constitute a VWFA domain. Residues 230–412 (GFDILLGLGI…LQKLRIYCDP (183 aa)) enclose the Laminin G-like domain. 2 disordered regions span residues 441–788 (PAPC…GKEQ) and 820–935 (CKTQ…DAGI). 8 Collagen-like domains span residues 448-501 (PGEK…PRGF), 502-543 (AGLK…DKGD), 544-591 (IGID…EEGK), 592-642 (PGPP…ISGP), 643-684 (EGIS…IPGQ), 685-741 (QGYT…EIGE), 742-786 (HGHR…QQGK), and 825-882 (GSPG…GNKG). Residues 483–498 (TSGSPGIPGSPGVQGP) are compositionally biased toward low complexity. The segment covering 535–556 (MGPKGDKGDIGIDGKKGTKGDK) has biased composition (basic and acidic residues). Composition is skewed to low complexity over residues 597–616 (MEGLRGLPGIPGIPGNDGAN) and 633–649 (PTGTPGISGPEGISGPQ). Residues 733 to 744 (KGEKGEIGEHGH) are compositionally biased toward basic and acidic residues. The segment covering 775 to 786 (QGLPGPKGQQGK) has biased composition (low complexity).

Belongs to the fibril-associated collagens with interrupted helices (FACIT) family.

It is found in the secreted. Its subcellular location is the extracellular space. The protein localises to the extracellular matrix. It localises to the cytoplasm. The protein is Collagen alpha-1(XXI) chain (col21a1) of Xenopus laevis (African clawed frog).